A 78-amino-acid chain; its full sequence is uncharacterized protein (78 aa).

Positions 1–78 (MSSNSNTDHS…VDLEGPKDEQ (78 aa)) are disordered. Composition is skewed to basic and acidic residues over residues 10-33 (STGD…ETES) and 63-78 (LNLK…KDEQ).

This is an uncharacterized protein from Schizosaccharomyces pombe (strain 972 / ATCC 24843) (Fission yeast).